Reading from the N-terminus, the 305-residue chain is MSWLTEYVRPKIRTLLGRRDVPDNLWVQCPACQQMIFARDLEKNQRVCTHCDHHMRGTALERLKWTLDEGYTRIELPKAPQDPLRFRDSKRYTDRLRDAREKTHLDDAIVVAHGTIEGQKAVVAAMAFEFMGGSMGAAVGEGIVAAAQLAVLQKAPFIIFTASGGARMQEAAISLMQMPRTTIATRMVKEAGLPFIVVLTDPTTGGVTASFAMLGDIQIAEPKALIGFAGARVIEDTTREKLPEGFQRAEFLLEHGIVDMVVRRADMRATLSRVIALLTEGVTLPKVESVASLTEAKQPARTADA.

The 269-residue stretch at 25–293 (LWVQCPACQQ…LPKVESVASL (269 aa)) folds into the CoA carboxyltransferase N-terminal domain. Cys-29, Cys-32, Cys-48, and Cys-51 together coordinate Zn(2+). The C4-type zinc finger occupies 29–51 (CPACQQMIFARDLEKNQRVCTHC).

It belongs to the AccD/PCCB family. In terms of assembly, acetyl-CoA carboxylase is a heterohexamer composed of biotin carboxyl carrier protein (AccB), biotin carboxylase (AccC) and two subunits each of ACCase subunit alpha (AccA) and ACCase subunit beta (AccD). Requires Zn(2+) as cofactor.

The protein localises to the cytoplasm. It catalyses the reaction N(6)-carboxybiotinyl-L-lysyl-[protein] + acetyl-CoA = N(6)-biotinyl-L-lysyl-[protein] + malonyl-CoA. It participates in lipid metabolism; malonyl-CoA biosynthesis; malonyl-CoA from acetyl-CoA: step 1/1. Component of the acetyl coenzyme A carboxylase (ACC) complex. Biotin carboxylase (BC) catalyzes the carboxylation of biotin on its carrier protein (BCCP) and then the CO(2) group is transferred by the transcarboxylase to acetyl-CoA to form malonyl-CoA. The sequence is that of Acetyl-coenzyme A carboxylase carboxyl transferase subunit beta from Granulibacter bethesdensis (strain ATCC BAA-1260 / CGDNIH1).